The following is a 241-amino-acid chain: tRNA pseudouridine synthase A (241 aa).

Catalysis depends on Asp52, which acts as the Nucleophile. Residue Tyr111 participates in substrate binding.

This sequence belongs to the tRNA pseudouridine synthase TruA family. In terms of assembly, homodimer.

The catalysed reaction is uridine(38/39/40) in tRNA = pseudouridine(38/39/40) in tRNA. Formation of pseudouridine at positions 38, 39 and 40 in the anticodon stem and loop of transfer RNAs. The protein is tRNA pseudouridine synthase A of Ureaplasma urealyticum serovar 10 (strain ATCC 33699 / Western).